The sequence spans 235 residues: BPI fold-containing family A member 2 (235 aa).

The signal sequence occupies residues 1–20 (MFQLGSLVVLCGLLIGNSES). A disulfide bond links cysteine 161 and cysteine 204.

The protein belongs to the BPI/LBP/Plunc superfamily. Plunc family. In terms of tissue distribution, predominates in the parotid glands, present in smaller amounts (1/10) in the submaxillary glands and in the sublingual glands, and at lower amount in the pancreas but undetectable in the liver. Found also in lacrimal gland.

The protein resides in the secreted. Has strong antibacterial activity against P.aeruginosa. This is BPI fold-containing family A member 2 (Bpifa2) from Mus musculus (Mouse).